The chain runs to 491 residues: Probable CtpA-like serine protease (491 aa).

Residues 1–22 (MSESKDTTEVNQEVNEKASSQS) form a disordered region. The span at 9-22 (EVNQEVNEKASSQS) shows a compositional bias: polar residues. The helical transmembrane segment at 34-54 (FIIILIVTILVTAMIAVFATI) threads the bilayer. Positions 119-201 (TKSFNEDVSG…TKVTLTIERG (83 aa)) constitute a PDZ domain. Residues S324, D335, and K349 each act as charge relay system in the active site.

This sequence belongs to the peptidase S41A family.

Its subcellular location is the cell membrane. The sequence is that of Probable CtpA-like serine protease from Staphylococcus saprophyticus subsp. saprophyticus (strain ATCC 15305 / DSM 20229 / NCIMB 8711 / NCTC 7292 / S-41).